The chain runs to 297 residues: MKTLVVALGGNALLQRGEALTAENQYRNIASAVPALARLARSYRLAIVHGNGPQVGLLALQNLAWKEVEPYPLDVLVAESQGMIGYMLAQSLSAQPQMPPVTTVRTRIEVSPDDPAFLQPEKFIGPVYQPEEQEALEAAYGWQMKRDGKYLRRVVASPQPRKILDSEAIELLLKEGHVVICSGGGGVPVTDDGAGSEAVIDKDLAAALLAEQINADGLVILTDADAVYENWGMPQQRAIRHATPDELAPFAKADGSMGPKVTAVSGYVRSRGKPAWIGALSRIEETLAGEAGTCISL.

This sequence belongs to the carbamate kinase family.

It is found in the cytoplasm. It carries out the reaction hydrogencarbonate + NH4(+) + ATP = carbamoyl phosphate + ADP + H2O + H(+). It catalyses the reaction carbamate + ATP = carbamoyl phosphate + ADP. The catalysed reaction is hydrogencarbonate + NH4(+) = carbamate + H2O + H(+). Its pathway is nitrogen metabolism; (S)-allantoin degradation. In terms of biological role, kinase involved in the anaerobic nitrogen utilization via the assimilation of allantoin. Catalyzes the transfer of a phosphate group from carbamoyl phosphate to ADP to produce ATP and leave carbamate, which spontaneously hydrolyzes to ammonia and hydrogencarbonate. In Escherichia coli O157:H7, this protein is Carbamate kinase.